Consider the following 389-residue polypeptide: LL-diaminopimelate aminotransferase (389 aa).

Residues Tyr16 and Gly41 each coordinate substrate. Residues Tyr70, 104–105, Tyr129, Asn179, Tyr210, and 239–241 contribute to the pyridoxal 5'-phosphate site; these read SK and SLS. Substrate contacts are provided by Lys105, Tyr129, and Asn179. Lys242 bears the N6-(pyridoxal phosphate)lysine mark. Arg250 serves as a coordination point for pyridoxal 5'-phosphate. Substrate is bound at residue Arg369.

Belongs to the class-I pyridoxal-phosphate-dependent aminotransferase family. LL-diaminopimelate aminotransferase subfamily. Homodimer. Pyridoxal 5'-phosphate serves as cofactor.

The enzyme catalyses (2S,6S)-2,6-diaminopimelate + 2-oxoglutarate = (S)-2,3,4,5-tetrahydrodipicolinate + L-glutamate + H2O + H(+). Its pathway is amino-acid biosynthesis; L-lysine biosynthesis via DAP pathway; LL-2,6-diaminopimelate from (S)-tetrahydrodipicolinate (aminotransferase route): step 1/1. In terms of biological role, involved in the synthesis of meso-diaminopimelate (m-DAP or DL-DAP), required for both lysine and peptidoglycan biosynthesis. Catalyzes the direct conversion of tetrahydrodipicolinate to LL-diaminopimelate. The polypeptide is LL-diaminopimelate aminotransferase (Nitratidesulfovibrio vulgaris (strain DSM 19637 / Miyazaki F) (Desulfovibrio vulgaris)).